The primary structure comprises 37 residues: Neuropeptide Y2-like conopeptide (37 aa).

Y37 carries the post-translational modification Tyrosine amide.

The protein belongs to the NPY family. Expressed by the venom duct.

It is found in the secreted. Its function is as follows. Causes hyperactivity such as jumping, rapid circling and tail flicking, after intraventicular injection into mouse brain. The polypeptide is Neuropeptide Y2-like conopeptide (Conus betulinus (Beech cone)).